The following is a 501-amino-acid chain: Geissoschizine oxidase (501 aa).

Residues 1 to 21 form a helical membrane-spanning segment; it reads MEFSFSSPLLYILYFLLFFIV. Residue Cys442 coordinates heme.

The protein belongs to the cytochrome P450 family. It depends on heme as a cofactor.

The protein resides in the membrane. The enzyme catalyses (19E)-geissoschizine + reduced [NADPH--hemoprotein reductase] + O2 = akuammicine + formate + oxidized [NADPH--hemoprotein reductase] + H2O + H(+). It participates in alkaloid biosynthesis. Its function is as follows. A cytochrome P450 monooxygenase involved in the biosynthesis of strychnos monoterpene indole alkaloids (MIAs) natural products, compounds with effects on glucose absorption. Catalyzes the conversion of geissoschizine to akuammicine. The polypeptide is Geissoschizine oxidase (Alstonia scholaris (Dogbane)).